The sequence spans 250 residues: MAKNYPVVSAEYQEAVEKARQKLRALIAEKSCAPLMLRLAWHSAGTFDVSSKTGGPFGTMKTPAELSHAANAGLDIAVRMLEPIKEEIPTISYADFYQLAGVVAVEVSGGPAVPFHPGREDKPAPPPEGRLPDATKGSDHLRQVFGAQMGLSDQDIVALSGGHTLGRCHKERSGFEGPWTRNPLQFDNSYFTELLSGDKEGLLQLPSDKALLSDPAFRPLVEKYAADEKAFFEDYKEAHLKLSELGFADA.

The Proton acceptor role is filled by His42. The disordered stretch occupies residues 113–137 (VPFHPGREDKPAPPPEGRLPDATKG). Residue His163 participates in heme b binding. Residues Thr164, Thr180, Asn182, and Asp187 each coordinate K(+).

The protein belongs to the peroxidase family. Ascorbate peroxidase subfamily. Heme b serves as cofactor. In terms of tissue distribution, expressed in roots, aerial vegetative parts and reproductive organs. Expressed in roots, leaves, stems and flowers.

It is found in the cytoplasm. The catalysed reaction is L-ascorbate + H2O2 = L-dehydroascorbate + 2 H2O. Its activity is regulated as follows. Inhibited by p-chloromercuriphenylsulfonic acid (CMPSA). In terms of biological role, plays a key role in hydrogen peroxide removal. In Oryza sativa subsp. japonica (Rice), this protein is L-ascorbate peroxidase 1, cytosolic.